Consider the following 165-residue polypeptide: UPF0303 protein BamMC406_1480 (165 aa).

Belongs to the UPF0303 family.

The sequence is that of UPF0303 protein BamMC406_1480 from Burkholderia ambifaria (strain MC40-6).